Here is a 241-residue protein sequence, read N- to C-terminus: 3-deoxy-D-manno-octulosonic acid kinase (241 aa).

The active site involves aspartate 171.

It belongs to the protein kinase superfamily. KdkA/RfaP family.

The protein resides in the cell inner membrane. It catalyses the reaction an alpha-Kdo-(2-&gt;6)-lipid IVA + ATP = a 4-O-phospho-alpha-Kdo-(2-&gt;6)-lipid IVA + ADP + H(+). Its pathway is bacterial outer membrane biogenesis; LPS core biosynthesis. Functionally, catalyzes the ATP-dependent phosphorylation of the 3-deoxy-D-manno-octulosonic acid (Kdo) residue in Kdo-lipid IV(A) at the 4-OH position. This chain is 3-deoxy-D-manno-octulosonic acid kinase, found in Haemophilus influenzae (strain PittGG).